The chain runs to 513 residues: Maturase K (513 aa).

The protein belongs to the intron maturase 2 family. MatK subfamily.

The protein resides in the plastid. It is found in the chloroplast. In terms of biological role, usually encoded in the trnK tRNA gene intron. Probably assists in splicing its own and other chloroplast group II introns. This chain is Maturase K, found in Sporobolus michauxianus (Prairie cordgrass).